We begin with the raw amino-acid sequence, 259 residues long: Probable ABC transporter permease protein RBE_1340 (259 aa).

5 helical membrane passes run 25-45, 49-69, 148-168, 195-215, and 237-257; these read IFSL…SLII, LFIG…SGAV, VIAA…IGVM, PIDV…ISII, and AVVN…ELFF.

Belongs to the MlaE permease family.

It localises to the cell inner membrane. Its function is as follows. Could be part of an ABC transporter complex. This Rickettsia bellii (strain RML369-C) protein is Probable ABC transporter permease protein RBE_1340.